The sequence spans 199 residues: MANRGPSYGLSREVQEKIEQKYDADLENKLVDWIILQCAEDIEHPPPGRAHFQKWLMDGTVLCKLINSLYPPGQEPIPKISESKMAFKQMEQISQFLKAAEVYGVRTTDIFQTVDLWEGKDMAAVQRTLMALGSVAVTKDDGCYRGEPSWFHRKAQQNRRGFSEEQLRQGQNVIGLQMGSNKGASQAGMTGYGMPRQIM.

Positions 24-136 (ADLENKLVDW…RTLMALGSVA (113 aa)) constitute a Calponin-homology (CH) domain. The residue at position 163 (S163) is a Phosphoserine. One copy of the Calponin-like repeat lies at 174–199 (IGLQMGSNKGASQAGMTGYGMPRQIM). The segment covering 178 to 188 (MGSNKGASQAG) has biased composition (polar residues). The tract at residues 178–199 (MGSNKGASQAGMTGYGMPRQIM) is disordered.

The protein belongs to the calponin family.

This chain is Transgelin-3 (Tagln3), found in Mus musculus (Mouse).